Here is a 731-residue protein sequence, read N- to C-terminus: E3 ubiquitin-protein ligase COP1 (731 aa).

A disordered region spans residues 1–40; it reads MSGSRQAGSGSAGTSPGSSAASSVTSASSSLSSSPSPPSV. The Nuclear localization signal 1 signature appears at 109–113; sequence GSRKR. An RING-type zinc finger spans residues 136–174; that stretch reads CPICFDMIEEAYMTKCGHSFCYKCIHQSLEDNNRCPKCN. Positions 195–206 match the Nuclear localization signal 2 motif; that stretch reads KQKQRFEEKRFK. Residues 233–301 adopt a coiled-coil conformation; sequence LDLANVNLML…DIKRVEEMSG (69 aa). Positions 235-245 match the Nuclear export signal motif; it reads LANVNLMLELL. The interval 305-325 is disordered; the sequence is PVSEDSTVPQFEAPSPSHSSI. 7 WD repeats span residues 419-458, 468-508, 511-551, 553-593, 597-635, 638-677, and 691-729; these read NGSS…QDAV, TCNS…RSKV, EHEK…SVAS, EAKA…QPIM, GHRK…CLRS, GHIN…TLLT, and RKED…KVLE. An interaction with TRIB1 region spans residues 643–645; that stretch reads KNF.

The protein belongs to the COP1 family. As to quaternary structure, homodimer. Homodimerization is mediated by the coiled coil domain. Component of the DCX DET1-COP1 ubiquitin ligase complex at least composed of RBX1, DET1, DDB1, CUL4A and COP1. Isoform 2 does not interact with CUL4A but still binds to RBX1, suggesting that the interaction may be mediated by another cullin protein. Isoform 1 and isoform 2 interact with CUL5 but not with CUL1, CUL2 not CUL3. Interacts with bZIP transcription factors JUN, JUNB and JUND but not with FOS, ATF2 nor XBP1. Interacts with p53 (TP53). Interacts with COPS6; this interaction stabilizes RFWD2 through reducing its auto-ubiquitination and decelerating its turnover rate. Interacts with SFN; this interaction leads to SFN degradation. Isoform 4 forms heterodimers with isoform 1, preventing its association with DET1. Interacts with p53/TP53 and MTA1. Interacts with TRIB1 (via C-terminus) and TRIB2. Autoubiquitinated. MTA1 destabilizes it by promoting its autoubiquitination. As to expression, ubiquitously expressed at low level. Expressed at higher level in testis, placenta, skeletal muscle and heart.

It localises to the nucleus speckle. The protein resides in the cytoplasm. It carries out the reaction S-ubiquitinyl-[E2 ubiquitin-conjugating enzyme]-L-cysteine + [acceptor protein]-L-lysine = [E2 ubiquitin-conjugating enzyme]-L-cysteine + N(6)-ubiquitinyl-[acceptor protein]-L-lysine.. It participates in protein modification; protein ubiquitination. Its activity is regulated as follows. TRIB1 competes with substrates for RFWD2 binding. Functionally, E3 ubiquitin-protein ligase that mediates ubiquitination and subsequent proteasomal degradation of target proteins. E3 ubiquitin ligases accept ubiquitin from an E2 ubiquitin-conjugating enzyme in the form of a thioester and then directly transfers the ubiquitin to targeted substrates. Involved in JUN ubiquitination and degradation. Directly involved in p53 (TP53) ubiquitination and degradation, thereby abolishing p53-dependent transcription and apoptosis. Ubiquitinates p53 independently of MDM2 or RCHY1. Probably mediates E3 ubiquitin ligase activity by functioning as the essential RING domain subunit of larger E3 complexes. In contrast, it does not constitute the catalytic RING subunit in the DCX DET1-COP1 complex that negatively regulates JUN, the ubiquitin ligase activity being mediated by RBX1. Involved in 14-3-3 protein sigma/SFN ubiquitination and proteasomal degradation, leading to AKT activation and promotion of cell survival. Ubiquitinates MTA1 leading to its proteasomal degradation. Upon binding to TRIB1, ubiquitinates CEBPA, which lacks a canonical COP1-binding motif. This chain is E3 ubiquitin-protein ligase COP1, found in Homo sapiens (Human).